Reading from the N-terminus, the 285-residue chain is Phosphatidylserine decarboxylase proenzyme (285 aa).

Catalysis depends on charge relay system; for autoendoproteolytic cleavage activity residues aspartate 89, histidine 146, and serine 252. Serine 252 functions as the Schiff-base intermediate with substrate; via pyruvic acid; for decarboxylase activity in the catalytic mechanism. At serine 252 the chain carries Pyruvic acid (Ser); by autocatalysis.

It belongs to the phosphatidylserine decarboxylase family. PSD-B subfamily. Prokaryotic type I sub-subfamily. In terms of assembly, heterodimer of a large membrane-associated beta subunit and a small pyruvoyl-containing alpha subunit. Pyruvate is required as a cofactor. Post-translationally, is synthesized initially as an inactive proenzyme. Formation of the active enzyme involves a self-maturation process in which the active site pyruvoyl group is generated from an internal serine residue via an autocatalytic post-translational modification. Two non-identical subunits are generated from the proenzyme in this reaction, and the pyruvate is formed at the N-terminus of the alpha chain, which is derived from the carboxyl end of the proenzyme. The autoendoproteolytic cleavage occurs by a canonical serine protease mechanism, in which the side chain hydroxyl group of the serine supplies its oxygen atom to form the C-terminus of the beta chain, while the remainder of the serine residue undergoes an oxidative deamination to produce ammonia and the pyruvoyl prosthetic group on the alpha chain. During this reaction, the Ser that is part of the protease active site of the proenzyme becomes the pyruvoyl prosthetic group, which constitutes an essential element of the active site of the mature decarboxylase.

The protein localises to the cell membrane. The enzyme catalyses a 1,2-diacyl-sn-glycero-3-phospho-L-serine + H(+) = a 1,2-diacyl-sn-glycero-3-phosphoethanolamine + CO2. It functions in the pathway phospholipid metabolism; phosphatidylethanolamine biosynthesis; phosphatidylethanolamine from CDP-diacylglycerol: step 2/2. Catalyzes the formation of phosphatidylethanolamine (PtdEtn) from phosphatidylserine (PtdSer). The sequence is that of Phosphatidylserine decarboxylase proenzyme from Vibrio parahaemolyticus serotype O3:K6 (strain RIMD 2210633).